Consider the following 807-residue polypeptide: MFCRKYAFQTWKQFSRFYSAVNNIRASKTRNIGIIAHIDAGKTTTTERMIYYSGKIKRIGNVDEGDTVTDYLPSERERGITIQSAAITLPWNQHKINIIDTPGHADFTFEVIRSLRVLDGAVTILDAVAGVEAQTEKVWKQASSLNLPKIVYVNKMDRPGAGFSRTVQEVIQKLETRVVLCNLPYFETNKESDLEFKGVIDVIHQKLLKWNEMDANGNEISVVDIDKTTPELLQILEKSRESMVETLGEYDERIIDSFLEHDENYLKIPPILLDQVIRKATIDNYLTPVFCGASFRNIGVQPLMDGITKYLPSPLETSLPEITKNGKEVPKKADDEKGLVVANDNNLTLALAFKVMTHSTRGPMTFVRVYSGKLNAASNLINTRTGKKLLIRKLLVMHGDSPEEVKSISAGNIGVIPGYETDFQTGDTLVSSAVAKRNFTAKDSAYRLLPIDIPPPLFNAAIEPHTAGDEAYMKQCVETLIREDPSLKVHLDEEMGQVVLSGMGELHLDIVRERLVNDMKAKVNLKDVVVSYKESYVGKKEKEAVITDEEIEVVVTLSHTEDARDYIGQEGALVIEGDNNVILLSQTALSEHVQATIDERRWKCENNLEELKEAILNGCLTALQMGGPILGFPLHSTLVTVKRWNAPVEQAQEQALNLMNASRQAVQSLKNEEKDFSILEPIMSIKVYVDSNDLGEVSHDLTQRCKAMIVEIQDQSTQNLETAAWAKDEATKVYVPPDYTIKKNVSKFDDIANKKIIVAETPLREMIGYLSKLRALTQGRATFDMTLIGMRRAVGNRVDSIVEEYKF.

Residues 1–18 constitute a mitochondrion transit peptide; it reads MFCRKYAFQTWKQFSRFY. In terms of domain architecture, tr-type G spans 27–315; the sequence is SKTRNIGIIA…GITKYLPSPL (289 aa). GTP is bound by residues 36–43, 100–104, and 154–157; these read AHIDAGKT, DTPGH, and NKMD.

The protein belongs to the TRAFAC class translation factor GTPase superfamily. Classic translation factor GTPase family. EF-G/EF-2 subfamily.

The protein resides in the mitochondrion. Its function is as follows. Mitochondrial GTPase that mediates the disassembly of ribosomes from messenger RNA at the termination of mitochondrial protein biosynthesis. Not involved in the GTP-dependent ribosomal translocation step during translation elongation. This is Ribosome-releasing factor 2, mitochondrial from Candida dubliniensis (strain CD36 / ATCC MYA-646 / CBS 7987 / NCPF 3949 / NRRL Y-17841) (Yeast).